Consider the following 262-residue polypeptide: Translation initiation factor 2 subunit alpha (262 aa).

The 72-residue stretch at 15 to 86 (GELVVGTVHK…RKGHVDVSMK (72 aa)) folds into the S1 motif domain.

Belongs to the eIF-2-alpha family. In terms of assembly, heterotrimer composed of an alpha, a beta and a gamma chain.

Functionally, eIF-2 functions in the early steps of protein synthesis by forming a ternary complex with GTP and initiator tRNA. In Methanothermobacter thermautotrophicus (strain ATCC 29096 / DSM 1053 / JCM 10044 / NBRC 100330 / Delta H) (Methanobacterium thermoautotrophicum), this protein is Translation initiation factor 2 subunit alpha (eif2a).